Here is a 337-residue protein sequence, read N- to C-terminus: Ketol-acid reductoisomerase (NADP(+)) (337 aa).

The region spanning 3 to 183 (VEMFYDDDAD…GGTRAGVIKT (181 aa)) is the KARI N-terminal Rossmann domain. Residues 26 to 29 (YGSQ), S52, S54, and 84 to 87 (DTAQ) contribute to the NADP(+) site. The active site involves H109. G135 contributes to the NADP(+) binding site. The 146-residue stretch at 184–329 (TFKEETETDL…AKLRGLMSWV (146 aa)) folds into the KARI C-terminal knotted domain. D192, E196, E228, and E232 together coordinate Mg(2+). Residue S253 participates in substrate binding.

The protein belongs to the ketol-acid reductoisomerase family. Requires Mg(2+) as cofactor.

It catalyses the reaction (2R)-2,3-dihydroxy-3-methylbutanoate + NADP(+) = (2S)-2-acetolactate + NADPH + H(+). It carries out the reaction (2R,3R)-2,3-dihydroxy-3-methylpentanoate + NADP(+) = (S)-2-ethyl-2-hydroxy-3-oxobutanoate + NADPH + H(+). The protein operates within amino-acid biosynthesis; L-isoleucine biosynthesis; L-isoleucine from 2-oxobutanoate: step 2/4. It participates in amino-acid biosynthesis; L-valine biosynthesis; L-valine from pyruvate: step 2/4. Functionally, involved in the biosynthesis of branched-chain amino acids (BCAA). Catalyzes an alkyl-migration followed by a ketol-acid reduction of (S)-2-acetolactate (S2AL) to yield (R)-2,3-dihydroxy-isovalerate. In the isomerase reaction, S2AL is rearranged via a Mg-dependent methyl migration to produce 3-hydroxy-3-methyl-2-ketobutyrate (HMKB). In the reductase reaction, this 2-ketoacid undergoes a metal-dependent reduction by NADPH to yield (R)-2,3-dihydroxy-isovalerate. This Nocardia farcinica (strain IFM 10152) protein is Ketol-acid reductoisomerase (NADP(+)).